A 294-amino-acid chain; its full sequence is 4-hydroxy-tetrahydrodipicolinate synthase (294 aa).

Thr-47 lines the pyruvate pocket. The Proton donor/acceptor role is filled by Tyr-135. Residue Lys-163 is the Schiff-base intermediate with substrate of the active site. Residue Ile-206 participates in pyruvate binding.

This sequence belongs to the DapA family. Homodimer.

The protein localises to the cytoplasm. The catalysed reaction is L-aspartate 4-semialdehyde + pyruvate = (2S,4S)-4-hydroxy-2,3,4,5-tetrahydrodipicolinate + H2O + H(+). Its pathway is amino-acid biosynthesis; L-lysine biosynthesis via DAP pathway; (S)-tetrahydrodipicolinate from L-aspartate: step 3/4. Catalyzes the condensation of (S)-aspartate-beta-semialdehyde [(S)-ASA] and pyruvate to 4-hydroxy-tetrahydrodipicolinate (HTPA). In Staphylococcus haemolyticus (strain JCSC1435), this protein is 4-hydroxy-tetrahydrodipicolinate synthase.